Here is a 1159-residue protein sequence, read N- to C-terminus: WASH complex subunit 5 (1159 aa).

Serine 917 bears the Phosphoserine mark.

Belongs to the strumpellin family. Component of the WASH core complex also described as WASH regulatory complex (SHRC) composed of WASH (WASHC1, WASH2P or WASH3P), WASHC2 (WASHC2A or WASHC2C), WASHC3, WASHC4 and WASHC5. The WASH core complex associates via WASHC2 with the F-actin-capping protein dimer (formed by CAPZA1, CAPZA2 or CAPZA3 and CAPZB) in a transient or substoichiometric manner which was initially described as WASH complex. Interacts with VCP, PI4K2A. In terms of tissue distribution, expressed ubiquitously.

The protein resides in the cytoplasm. The protein localises to the cytosol. It localises to the endoplasmic reticulum. Its subcellular location is the early endosome. In terms of biological role, acts as a component of the WASH core complex that functions as a nucleation-promoting factor (NPF) at the surface of endosomes, where it recruits and activates the Arp2/3 complex to induce actin polymerization, playing a key role in the fission of tubules that serve as transport intermediates during endosome sorting. May be involved in axonal outgrowth. Involved in cellular localization of ADRB2. Involved in cellular trafficking of BLOC-1 complex cargos such as ATP7A and VAMP7. The sequence is that of WASH complex subunit 5 from Homo sapiens (Human).